A 370-amino-acid polypeptide reads, in one-letter code: Notoamide biosynthesis cluster protein J (370 aa).

The signal sequence occupies residues 1 to 22 (MRIMSIMLHLLATILLSSAVSA). N-linked (GlcNAc...) asparagine glycosylation is found at Asn159, Asn167, Asn192, Asn235, Asn282, Asn340, and Asn346.

Functionally, part of the gene cluster that mediates the biosynthesis of notoamide, a fungal indole alkaloid that belongs to a family of natural products containing a characteristic bicyclo[2.2.2]diazaoctane core. The first step of notoamide biosynthesis involves coupling of L-proline and L-tryptophan by the bimodular NRPS notE, to produce cyclo-L-tryptophan-L-proline called brevianamide F. The reverse prenyltransferase notF then acts as a deoxybrevianamide E synthase and converts brevianamide F to deoxybrevianamide E via reverse prenylation at C-2 of the indole ring leading to the bicyclo[2.2.2]diazaoctane core. Deoxybrevianamide E is further hydroxylated at C-6 of the indole ring, likely catalyzed by the cytochrome P450 monooxygenase notG, to yield 6-hydroxy-deoxybrevianamide E. 6-hydroxy-deoxybrevianamide E is a specific substrate of the prenyltransferase notC for normal prenylation at C-7 to produce 6-hydroxy-7-prenyl-deoxybrevianamide, also called notoamide S. As the proposed pivotal branching point in notoamide biosynthesis, notoamide S can be diverted to notoamide E through an oxidative pyran ring closure putatively catalyzed by either notH cytochrome P450 monooxygenase or the notD FAD-linked oxidoreductase. This step would be followed by an indole 2,3-epoxidation-initiated pinacol-like rearrangement catalyzed by the notB FAD-dependent monooxygenase leading to the formation of notoamide C and notoamide D. On the other hand notoamide S is converted to notoamide T by notH (or notD), a bifunctional oxidase that also functions as the intramolecular Diels-Alderase responsible for generation of (+)-notoamide T. To generate antipodal (-)-notoaminide T, notH' (or notD') in Aspergillus versicolor is expected to catalyze a Diels-Alder reaction leading to the opposite stereochemistry. The remaining oxidoreductase notD (or notH) likely catalyzes the oxidative pyran ring formation to yield (+)-stephacidin A. The FAD-dependent monooxygenase notI is highly similar to notB and is predicted to catalyze a similar conversion from (+)-stephacidin A to (-)-notoamide B via the 2,3-epoxidation of (+)-stephacidin A followed by a pinacol-type rearrangement. Finally, it remains unclear which enzyme could be responsible for the final hydroxylation steps leading to notoamide A and sclerotiamide. The function of notJ in the notoamide biosynthesis has not been determined yet. The polypeptide is Notoamide biosynthesis cluster protein J (Aspergillus sp. (strain MF297-2)).